The following is a 517-amino-acid chain: 2-isopropylmalate synthase (517 aa).

The Pyruvate carboxyltransferase domain maps to 7–269; that stretch reads VIIFDTTLRD…ETGIDTTQIV (263 aa). Mn(2+) is bound by residues aspartate 16, histidine 204, histidine 206, and asparagine 240. Positions 366 to 517 are required for the condensation reaction. Not required to bind substrate; the sequence is LADKKREIFD…KPKAQGSGTI (152 aa). Residues 395–517 are regulatory domain; that stretch reads KFISQKISTE…KPKAQGSGTI (123 aa).

The protein belongs to the alpha-IPM synthase/homocitrate synthase family. LeuA type 1 subfamily. As to quaternary structure, homodimer. Remains a homodimer in the presence of L-leucine. Mn(2+) is required as a cofactor.

The protein resides in the cytoplasm. It carries out the reaction 3-methyl-2-oxobutanoate + acetyl-CoA + H2O = (2S)-2-isopropylmalate + CoA + H(+). The protein operates within amino-acid biosynthesis; L-leucine biosynthesis; L-leucine from 3-methyl-2-oxobutanoate: step 1/4. Inhibited by 3-bromo substituents and Leu, the pathway end product. Catalyzes the condensation of the acetyl group of acetyl-CoA with 3-methyl-2-oxobutanoate (2-ketoisovalerate) to form 3-carboxy-3-hydroxy-4-methylpentanoate (2-isopropylmalate). Complements an E.coli deletion. In Neisseria meningitidis serogroup B (strain ATCC BAA-335 / MC58), this protein is 2-isopropylmalate synthase.